A 657-amino-acid polypeptide reads, in one-letter code: UvrABC system protein B (657 aa).

The region spanning 24-409 is the Helicase ATP-binding domain; sequence AGVRNQVKSQ…SGHIVQQIIR (386 aa). ATP is bound at residue 37-44; it reads GTTGSGKT. The Beta-hairpin signature appears at 90-113; it reads YYDYYQPEAYIARSDTYIEKSLLI. Residues 426 to 589 form the Helicase C-terminal domain; that stretch reads QVDDLLEEIR…IVPKPIIKAI (164 aa). The region spanning 617–652 is the UVR domain; sequence EEQIKKYEALMQRAAKEFRFNEAAKYRDAMQACKEQ.

It belongs to the UvrB family. As to quaternary structure, forms a heterotetramer with UvrA during the search for lesions. Interacts with UvrC in an incision complex.

It is found in the cytoplasm. Functionally, the UvrABC repair system catalyzes the recognition and processing of DNA lesions. A damage recognition complex composed of 2 UvrA and 2 UvrB subunits scans DNA for abnormalities. Upon binding of the UvrA(2)B(2) complex to a putative damaged site, the DNA wraps around one UvrB monomer. DNA wrap is dependent on ATP binding by UvrB and probably causes local melting of the DNA helix, facilitating insertion of UvrB beta-hairpin between the DNA strands. Then UvrB probes one DNA strand for the presence of a lesion. If a lesion is found the UvrA subunits dissociate and the UvrB-DNA preincision complex is formed. This complex is subsequently bound by UvrC and the second UvrB is released. If no lesion is found, the DNA wraps around the other UvrB subunit that will check the other stand for damage. The chain is UvrABC system protein B from Chlamydia pneumoniae (Chlamydophila pneumoniae).